We begin with the raw amino-acid sequence, 93 residues long: DNA-directed RNA polymerase subunit Rpo11 (93 aa).

The protein belongs to the archaeal Rpo11/eukaryotic RPB11/RPC19 RNA polymerase subunit family. As to quaternary structure, part of the RNA polymerase complex.

Its subcellular location is the cytoplasm. The catalysed reaction is RNA(n) + a ribonucleoside 5'-triphosphate = RNA(n+1) + diphosphate. DNA-dependent RNA polymerase (RNAP) catalyzes the transcription of DNA into RNA using the four ribonucleoside triphosphates as substrates. The protein is DNA-directed RNA polymerase subunit Rpo11 of Sulfurisphaera tokodaii (strain DSM 16993 / JCM 10545 / NBRC 100140 / 7) (Sulfolobus tokodaii).